The following is a 699-amino-acid chain: Endoplasmic reticulum mannosyl-oligosaccharide 1,2-alpha-mannosidase (699 aa).

At 1–84 (MAACEGRRSG…WKQLSRLQRN (84 aa)) the chain is on the cytoplasmic side. The chain crosses the membrane as a helical; Signal-anchor for type II membrane protein span at residues 85–105 (MILFLLAFLLFCGLLFYINLA). Residues 106-699 (DHWKALAFRL…AHPLPIWTPA (594 aa)) are Lumenal-facing. The interval 125–243 (IAGLKPANPP…LPPARTQGTP (119 aa)) is disordered. A compositionally biased stretch (basic and acidic residues) spans 176–201 (DLKDGTQEEATKRQEAPVDPRPEGDP). The active-site Proton donor is the Glu-330. Residue Asp-463 is part of the active site. Residues Cys-527 and Cys-556 are joined by a disulfide bond. Glu-570 serves as the catalytic Proton donor. Glu-599 is a catalytic residue. Residue Thr-688 coordinates Ca(2+).

This sequence belongs to the glycosyl hydrolase 47 family. Requires Ca(2+) as cofactor. In terms of tissue distribution, widely expressed.

It localises to the endoplasmic reticulum membrane. It catalyses the reaction N(4)-(alpha-D-Man-(1-&gt;2)-alpha-D-Man-(1-&gt;2)-alpha-D-Man-(1-&gt;3)-[alpha-D-Man-(1-&gt;2)-alpha-D-Man-(1-&gt;3)-[alpha-D-Man-(1-&gt;2)-alpha-D-Man-(1-&gt;6)]-alpha-D-Man-(1-&gt;6)]-beta-D-Man-(1-&gt;4)-beta-D-GlcNAc-(1-&gt;4)-beta-D-GlcNAc)-L-asparaginyl-[protein] (N-glucan mannose isomer 9A1,2,3B1,2,3) + 4 H2O = N(4)-(alpha-D-Man-(1-&gt;3)-[alpha-D-Man-(1-&gt;3)-[alpha-D-Man-(1-&gt;6)]-alpha-D-Man-(1-&gt;6)]-beta-D-Man-(1-&gt;4)-beta-D-GlcNAc-(1-&gt;4)-beta-D-GlcNAc)-L-asparaginyl-[protein] (N-glucan mannose isomer 5A1,2) + 4 beta-D-mannose. It carries out the reaction N(4)-(alpha-D-Man-(1-&gt;2)-alpha-D-Man-(1-&gt;2)-alpha-D-Man-(1-&gt;3)-[alpha-D-Man-(1-&gt;3)-[alpha-D-Man-(1-&gt;2)-alpha-D-Man-(1-&gt;6)]-alpha-D-Man-(1-&gt;6)]-beta-D-Man-(1-&gt;4)-beta-D-GlcNAc-(1-&gt;4)-beta-D-GlcNAc)-L-asparaginyl-[protein] (N-glucan mannose isomer 8A1,2,3B1,3) + 3 H2O = N(4)-(alpha-D-Man-(1-&gt;3)-[alpha-D-Man-(1-&gt;3)-[alpha-D-Man-(1-&gt;6)]-alpha-D-Man-(1-&gt;6)]-beta-D-Man-(1-&gt;4)-beta-D-GlcNAc-(1-&gt;4)-beta-D-GlcNAc)-L-asparaginyl-[protein] (N-glucan mannose isomer 5A1,2) + 3 beta-D-mannose. The protein operates within protein modification; protein glycosylation. Inhibited by both 1-deoxymannojirimycin (dMNJ) and kifunensine. In terms of biological role, involved in glycoprotein quality control targeting of misfolded glycoproteins for degradation. It primarily trims a single alpha-1,2-linked mannose residue from Man(9)GlcNAc(2) to produce Man(8)GlcNAc(2), but at high enzyme concentrations, as found in the ER quality control compartment (ERQC), it further trims the carbohydrates to Man(5-6)GlcNAc(2). This is Endoplasmic reticulum mannosyl-oligosaccharide 1,2-alpha-mannosidase (MAN1B1) from Homo sapiens (Human).